The following is a 106-amino-acid chain: Small ribosomal subunit protein mS33 (106 aa).

Serine 2 bears the N-acetylserine mark. The disordered stretch occupies residues 81-106 (EQRRLKKLRGKGKPRKGEGKRATKKK). The span at 84–94 (RLKKLRGKGKP) shows a compositional bias: basic residues. The span at 95–106 (RKGEGKRATKKK) shows a compositional bias: basic and acidic residues.

Belongs to the mitochondrion-specific ribosomal protein mS33 family. As to quaternary structure, component of the mitochondrial ribosome small subunit (28S) which comprises a 12S rRNA and about 30 distinct proteins.

It is found in the mitochondrion. This is Small ribosomal subunit protein mS33 (Mrps33) from Mus musculus (Mouse).